We begin with the raw amino-acid sequence, 364 residues long: Anhydro-N-acetylmuramic acid kinase (364 aa).

11–18 is a binding site for ATP; it reads GSSLDGID.

Belongs to the anhydro-N-acetylmuramic acid kinase family.

It carries out the reaction 1,6-anhydro-N-acetyl-beta-muramate + ATP + H2O = N-acetyl-D-muramate 6-phosphate + ADP + H(+). It participates in amino-sugar metabolism; 1,6-anhydro-N-acetylmuramate degradation. The protein operates within cell wall biogenesis; peptidoglycan recycling. Catalyzes the specific phosphorylation of 1,6-anhydro-N-acetylmuramic acid (anhMurNAc) with the simultaneous cleavage of the 1,6-anhydro ring, generating MurNAc-6-P. Is required for the utilization of anhMurNAc either imported from the medium or derived from its own cell wall murein, and thus plays a role in cell wall recycling. This is Anhydro-N-acetylmuramic acid kinase from Pseudomonas syringae pv. syringae (strain B728a).